The primary structure comprises 447 residues: Probable glycine dehydrogenase (decarboxylating) subunit 1 (447 aa).

The protein belongs to the GcvP family. N-terminal subunit subfamily. The glycine cleavage system is composed of four proteins: P, T, L and H. In this organism, the P 'protein' is a heterodimer of two subunits.

The enzyme catalyses N(6)-[(R)-lipoyl]-L-lysyl-[glycine-cleavage complex H protein] + glycine + H(+) = N(6)-[(R)-S(8)-aminomethyldihydrolipoyl]-L-lysyl-[glycine-cleavage complex H protein] + CO2. Its function is as follows. The glycine cleavage system catalyzes the degradation of glycine. The P protein binds the alpha-amino group of glycine through its pyridoxal phosphate cofactor; CO(2) is released and the remaining methylamine moiety is then transferred to the lipoamide cofactor of the H protein. This is Probable glycine dehydrogenase (decarboxylating) subunit 1 from Bacillus anthracis (strain A0248).